Here is a 361-residue protein sequence, read N- to C-terminus: Probable cinnamyl alcohol dehydrogenase (361 aa).

C48 contributes to the Zn(2+) binding site. T50 contributes to the NADP(+) binding site. Zn(2+) contacts are provided by H70, E71, C101, C104, C107, C115, and C164. NADP(+) contacts are provided by residues T168, G189–G194, S212–K217, T252, G276, and S299–I301.

It belongs to the zinc-containing alcohol dehydrogenase family. As to quaternary structure, homodimer. Zn(2+) is required as a cofactor.

The enzyme catalyses (E)-cinnamyl alcohol + NADP(+) = (E)-cinnamaldehyde + NADPH + H(+). The catalysed reaction is (E)-coniferol + NADP(+) = (E)-coniferaldehyde + NADPH + H(+). It catalyses the reaction (E)-sinapyl alcohol + NADP(+) = (E)-sinapaldehyde + NADPH + H(+). It carries out the reaction (E)-4-coumaroyl alcohol + NADP(+) = (E)-4-coumaraldehyde + NADPH + H(+). The enzyme catalyses (E)-caffeyl alcohol + NADP(+) = (E)-caffeyl aldehyde + NADPH + H(+). It functions in the pathway aromatic compound metabolism; phenylpropanoid biosynthesis. Functionally, involved in lignin biosynthesis. Catalyzes the final step specific for the production of lignin monomers. Catalyzes the NADPH-dependent reduction of coniferaldehyde, 5-hydroxyconiferaldehyde, sinapaldehyde, 4-coumaraldehyde and caffeyl aldehyde to their respective alcohols. The chain is Probable cinnamyl alcohol dehydrogenase from Lolium perenne (Perennial ryegrass).